The chain runs to 641 residues: Tetracycline resistance protein TetQ (641 aa).

The tr-type G domain maps to 1–244; that stretch reads MNIINLGILA…AITSFILPPA (244 aa). GTP contacts are provided by residues 10 to 17, 74 to 78, and 128 to 131; these read AHIDAGKT, DTPGH, and NKID.

This sequence belongs to the TRAFAC class translation factor GTPase superfamily. Classic translation factor GTPase family. TetM/TetO subfamily.

Its function is as follows. Abolishes the inhibitory effect of tetracyclin on protein synthesis by a non-covalent modification of the ribosomes. The sequence is that of Tetracycline resistance protein TetQ (tetQ) from Xylanibacter ruminicola (Prevotella ruminicola).